We begin with the raw amino-acid sequence, 396 residues long: Elongation factor Tu (396 aa).

The tr-type G domain maps to 10–206; that stretch reads KPHVNVGTIG…TLDEYIPEPE (197 aa). A G1 region spans residues 19–26; that stretch reads GHVDHGKT. 19-26 contacts GTP; that stretch reads GHVDHGKT. Mg(2+) is bound at residue threonine 26. The G2 stretch occupies residues 60–64; it reads GITIA. A G3 region spans residues 81 to 84; sequence DCPG. Residues 81 to 85 and 136 to 139 contribute to the GTP site; these read DCPGH and NKAD. Residues 136 to 139 are G4; that stretch reads NKAD. The G5 stretch occupies residues 174–176; the sequence is SAL.

The protein belongs to the TRAFAC class translation factor GTPase superfamily. Classic translation factor GTPase family. EF-Tu/EF-1A subfamily. In terms of assembly, monomer.

The protein resides in the cytoplasm. The catalysed reaction is GTP + H2O = GDP + phosphate + H(+). In terms of biological role, GTP hydrolase that promotes the GTP-dependent binding of aminoacyl-tRNA to the A-site of ribosomes during protein biosynthesis. The chain is Elongation factor Tu from Alcanivorax borkumensis (strain ATCC 700651 / DSM 11573 / NCIMB 13689 / SK2).